A 213-amino-acid chain; its full sequence is Ribosome maturation factor RimM (213 aa).

Residues 99–175 form the PRC barrel domain; that stretch reads DQDAAYISDL…RITMRLPEGL (77 aa). Positions 182–213 are disordered; sequence TATAREPRARRTRKRGLRKPITGADATPPDSQ. Residues 189–199 are compositionally biased toward basic residues; the sequence is RARRTRKRGLR.

Belongs to the RimM family. As to quaternary structure, binds ribosomal protein uS19.

The protein resides in the cytoplasm. Its function is as follows. An accessory protein needed during the final step in the assembly of 30S ribosomal subunit, possibly for assembly of the head region. Essential for efficient processing of 16S rRNA. May be needed both before and after RbfA during the maturation of 16S rRNA. It has affinity for free ribosomal 30S subunits but not for 70S ribosomes. The polypeptide is Ribosome maturation factor RimM (Acidobacterium capsulatum (strain ATCC 51196 / DSM 11244 / BCRC 80197 / JCM 7670 / NBRC 15755 / NCIMB 13165 / 161)).